The following is a 414-amino-acid chain: Na(+)-translocating NADH-quinone reductase subunit B (414 aa).

3 helical membrane passes run 56–76 (IMIM…YNAG), 129–149 (FLPI…LFCM), and 164–184 (ILFA…LGIT). Thr236 is modified (FMN phosphoryl threonine). A run of 5 helical transmembrane segments spans residues 268-288 (IPGS…AMIV), 297-317 (IIAG…VIGS), 325-345 (MPWH…FMAT), 358-378 (WWYG…NPAY), and 381-401 (GMML…HVVI).

The protein belongs to the NqrB/RnfD family. As to quaternary structure, composed of six subunits; NqrA, NqrB, NqrC, NqrD, NqrE and NqrF. The cofactor is FMN.

It localises to the cell inner membrane. The catalysed reaction is a ubiquinone + n Na(+)(in) + NADH + H(+) = a ubiquinol + n Na(+)(out) + NAD(+). Its activity is regulated as follows. This reaction is tightly coupled to the Na(+) pumping activity and specifically requires Na(+) for activity. Inhibited by korormicin and 2-N-heptyl-4-hydroxyquinoline N-oxide (HQNO). Functionally, NQR complex catalyzes the reduction of ubiquinone-1 to ubiquinol by two successive reactions, coupled with the transport of Na(+) ions from the cytoplasm to the periplasm. NqrA to NqrE are probably involved in the second step, the conversion of ubisemiquinone to ubiquinol. This chain is Na(+)-translocating NADH-quinone reductase subunit B, found in Vibrio alginolyticus.